The primary structure comprises 234 residues: Triosephosphate isomerase (234 aa).

Position 8-10 (8-10 (NFK)) interacts with substrate. The active-site Electrophile is the His-90. Catalysis depends on Glu-159, which acts as the Proton acceptor. Substrate contacts are provided by Gly-165 and Ser-197.

It belongs to the triosephosphate isomerase family. In terms of assembly, homodimer.

The protein resides in the cytoplasm. The catalysed reaction is D-glyceraldehyde 3-phosphate = dihydroxyacetone phosphate. It functions in the pathway carbohydrate biosynthesis; gluconeogenesis. It participates in carbohydrate degradation; glycolysis; D-glyceraldehyde 3-phosphate from glycerone phosphate: step 1/1. Involved in the gluconeogenesis. Catalyzes stereospecifically the conversion of dihydroxyacetone phosphate (DHAP) to D-glyceraldehyde-3-phosphate (G3P). In Helicobacter pylori (strain P12), this protein is Triosephosphate isomerase.